The sequence spans 320 residues: Taste receptor type 2 member 109 (320 aa).

The Extracellular portion of the chain corresponds to 1–14 (MEHFLKSIFDISKN). Residues 15-35 (VLPIILFIELIIGIIGNGFMA) traverse the membrane as a helical segment. Residues 36–62 (LVHCMDWVKRKKMSLVNQILTTLATSR) are Cytoplasmic-facing. A helical transmembrane segment spans residues 63 to 83 (ICLLWFMLLGLLITLLDPDLA). The Extracellular portion of the chain corresponds to 84–94 (SARMMIQVASN). A helical transmembrane segment spans residues 95–115 (LWIIANHMSIWLATCLTVFYF). The Cytoplasmic segment spans residues 116–135 (LKIANFSSSLFLYLKWRVEK). A helical membrane pass occupies residues 136–156 (VISVIFLVSLVLLFLNMLLMN). Over 157–191 (LENDMCIAEYHQINISYSFIYHYRADCERRVLRLH) the chain is Extracellular. An N-linked (GlcNAc...) asparagine glycan is attached at asparagine 170. Residues 192–212 (IIILSVPFVLSLPTFLLLIFS) traverse the membrane as a helical segment. Residues 213–240 (LWTHHKKMQQHVQGRRDASTTAHFKALQ) lie on the Cytoplasmic side of the membrane. A helical transmembrane segment spans residues 241-261 (TVIAFLLLYCIFILSMLLQFW). Over 262–270 (KYELMKKPL) the chain is Extracellular. Residues 271–291 (FILFCHIVYGAFPSFHSYVLI) form a helical membrane-spanning segment. Residues 292–320 (LGDMKLRQASLSVLLWLKCRPNYIETLDL) are Cytoplasmic-facing.

Belongs to the G-protein coupled receptor T2R family.

It is found in the membrane. Its function is as follows. Putative taste receptor which may play a role in the perception of bitterness. The chain is Taste receptor type 2 member 109 from Rattus norvegicus (Rat).